The following is a 114-amino-acid chain: Iron-sulfur cluster insertion protein ErpA (114 aa).

Residues Cys-42, Cys-106, and Cys-108 each contribute to the iron-sulfur cluster site.

It belongs to the HesB/IscA family. In terms of assembly, homodimer. It depends on iron-sulfur cluster as a cofactor.

Its function is as follows. Required for insertion of 4Fe-4S clusters for at least IspG. The protein is Iron-sulfur cluster insertion protein ErpA of Salmonella typhi.